A 193-amino-acid chain; its full sequence is MRGRDEDTGEFRGASRSQQRREALEIFDLGEKLVALTPAQLAKLPVPESLIPHIEESKRITSHIAHKRQLAFLAKHMRREDDETLAAIRDALDANSDTARREVAAIHRVERWRERLLADGDAALAELLEAYPAADRQQLRQLVRNAIHERAKNKPPRAYRELFQVLRDLSQEQGLESGDSGLEDGESALEDDE.

Residues 1–10 (MRGRDEDTGE) are compositionally biased toward basic and acidic residues. Disordered regions lie at residues 1 to 20 (MRGR…SQQR) and 171 to 193 (QEQG…EDDE). Over residues 181–193 (GLEDGESALEDDE) the composition is skewed to acidic residues.

It belongs to the DarP family.

It localises to the cytoplasm. In terms of biological role, member of a network of 50S ribosomal subunit biogenesis factors which assembles along the 30S-50S interface, preventing incorrect 23S rRNA structures from forming. Promotes peptidyl transferase center (PTC) maturation. This chain is Dual-action ribosomal maturation protein DarP, found in Xanthomonas oryzae pv. oryzae (strain MAFF 311018).